A 776-amino-acid chain; its full sequence is Disintegrin and metalloproteinase domain-containing protein 7 (776 aa).

An N-terminal signal peptide occupies residues Met1 to Gly23. Positions Val24–Thr176 are excised as a propeptide. The Extracellular segment spans residues Gly26–Val669. N-linked (GlcNAc...) asparagine glycosylation is found at Asn84, Asn167, and Asn174. A Peptidase M12B domain is found at Lys199 to Pro394. Cystine bridges form between Cys310–Cys389, Cys350–Cys373, Cys352–Cys357, and Cys460–Cys480. The Disintegrin domain maps to Phe402–Asn488. N-linked (GlcNAc...) asparagine glycans are attached at residues Asn584, Asn629, and Asn665. Residues Ala670–Ile690 form a helical membrane-spanning segment. Residues Arg691–Lys776 lie on the Cytoplasmic side of the membrane. Positions Thr757 to Lys776 are disordered.

Interacts with ITM2B in sperm; the interaction increases following capacitation. Interacts with HSPA5 and CANX.

The protein localises to the membrane. In terms of biological role, required for normal male fertility via maintenance of epithelial cell morphology in the caput epididymis and subsequently correct epididymis lumen structure required for sperm development. Plays a role in sperm motility, flagella morphology and tyrosine phosphorylation during sperm capacitance. Plays a role in normal expression levels of HSPA5, ITM2B and ADAM2 in sperm both prior to and post-capacitation. This is a non catalytic metalloprotease-like protein. The protein is Disintegrin and metalloproteinase domain-containing protein 7 (ADAM7) of Macaca fascicularis (Crab-eating macaque).